The sequence spans 350 residues: Galactokinase (350 aa).

14 to 17 (EHTD) is a binding site for substrate. ATP is bound by residues Ser46 and 96-102 (GAGLSSS). Residues Ser102 and Glu134 each coordinate Mg(2+). The Proton acceptor role is filled by Asp146. Tyr196 serves as a coordination point for substrate.

It belongs to the GHMP kinase family. GalK subfamily.

Its subcellular location is the cytoplasm. It carries out the reaction alpha-D-galactose + ATP = alpha-D-galactose 1-phosphate + ADP + H(+). It participates in carbohydrate metabolism; galactose metabolism. Its function is as follows. Catalyzes the transfer of the gamma-phosphate of ATP to D-galactose to form alpha-D-galactose-1-phosphate (Gal-1-P). The protein is Galactokinase of Thermotoga neapolitana.